The chain runs to 127 residues: Gamma-synuclein (127 aa).

Tandem repeats lie at residues 20–30 (EKTKQGVTEAA) and 31–41 (EKTKEGVMYVG). The 4 X 11 AA tandem repeats of [EGSA]-K-T-K-[EQ]-[GQ]-V-X(4) stretch occupies residues 20–67 (EKTKQGVTEAAEKTKEGVMYVGAKTKEGVVQSVTSVAEKTKEQANAVS). The stretch at 42–56 (AKTKEGVVQSVTSVA) is one 3; approximate repeat. The stretch at 57 to 67 (EKTKEQANAVS) is repeat 4. Ser67, Ser72, and Ser124 each carry phosphoserine. A disordered region spans residues 99 to 127 (ALKQPVPSQEDEAAKAEEQVAEETKSGGD). Residues 110 to 127 (EAAKAEEQVAEETKSGGD) show a composition bias toward basic and acidic residues.

The protein belongs to the synuclein family. In terms of assembly, may be a centrosome-associated protein. Interacts with MYOC; affects its secretion and its aggregation. Phosphorylated by BARK1 and GRK5. Predominantly expressed in retina (predominantly in outer nuclear layer, also in inner segment of photoreceptor cells, some individual cells located in the inner nuclear layer, inner plexiform layer and in nerve fiber layer). Also found in brain and heart.

Its subcellular location is the cytoplasm. The protein localises to the perinuclear region. It is found in the cytoskeleton. The protein resides in the microtubule organizing center. It localises to the centrosome. Its subcellular location is the spindle. Functionally, plays a role in neurofilament network integrity. May be involved in modulating axonal architecture during development and in the adult. In vitro, increases the susceptibility of neurofilament-H to calcium-dependent proteases. May also function in modulating the keratin network in skin. Activates the MAPK and Elk-1 signal transduction pathway. The chain is Gamma-synuclein (SNCG) from Bos taurus (Bovine).